Here is a 359-residue protein sequence, read N- to C-terminus: Aminomethyltransferase (359 aa).

The protein belongs to the GcvT family. As to quaternary structure, the glycine cleavage system is composed of four proteins: P, T, L and H.

The enzyme catalyses N(6)-[(R)-S(8)-aminomethyldihydrolipoyl]-L-lysyl-[protein] + (6S)-5,6,7,8-tetrahydrofolate = N(6)-[(R)-dihydrolipoyl]-L-lysyl-[protein] + (6R)-5,10-methylene-5,6,7,8-tetrahydrofolate + NH4(+). The glycine cleavage system catalyzes the degradation of glycine. The polypeptide is Aminomethyltransferase (Pseudoalteromonas atlantica (strain T6c / ATCC BAA-1087)).